Reading from the N-terminus, the 786-residue chain is Wall-associated receptor kinase-like 17 (786 aa).

An N-terminal signal peptide occupies residues 1 to 30 (MSYKNTNNSHLILFKLLLLLILYSADLTAS). Topologically, residues 31-369 (SSCRSECGGC…YRCVGDKTKA (339 aa)) are extracellular. N-linked (GlcNAc...) asparagine glycosylation is found at asparagine 69, asparagine 122, asparagine 160, asparagine 165, and asparagine 274. The tract at residues 301-362 (CICDYTMSII…CVNFEGGYRC (62 aa)) is atypical EGF-like. 3 cysteine pairs are disulfide-bonded: cysteine 303–cysteine 318, cysteine 340–cysteine 353, and cysteine 347–cysteine 362. The chain crosses the membrane as a helical span at residues 370-390 (IMIGAGTGFGVLVLVGGVWWL). The Cytoplasmic portion of the chain corresponds to 391–786 (RKFLVKRRMA…VEPLNPLLTW (396 aa)). Residue threonine 433 is modified to Phosphothreonine. Positions 444-719 (FSENRVLGHG…REVFTELERI (276 aa)) constitute a Protein kinase domain. ATP is bound by residues 450–458 (LGHGGQGTV) and lysine 472. Residue tyrosine 517 is modified to Phosphotyrosine. Aspartate 570 (proton acceptor) is an active-site residue. Phosphothreonine occurs at positions 604 and 609. A Phosphotyrosine modification is found at tyrosine 617. The span at 766–775 (SSIVASPPSS) shows a compositional bias: low complexity. The tract at residues 766-786 (SSIVASPPSSDVEPLNPLLTW) is disordered.

It belongs to the protein kinase superfamily. Ser/Thr protein kinase family.

Its subcellular location is the membrane. It catalyses the reaction L-seryl-[protein] + ATP = O-phospho-L-seryl-[protein] + ADP + H(+). The enzyme catalyses L-threonyl-[protein] + ATP = O-phospho-L-threonyl-[protein] + ADP + H(+). In terms of biological role, serine/threonine-protein kinase that may function as a signaling receptor of extracellular matrix component. The protein is Wall-associated receptor kinase-like 17 (WAKL17) of Arabidopsis thaliana (Mouse-ear cress).